The chain runs to 916 residues: Extracellular signal-regulated kinase 7 (916 aa).

In terms of domain architecture, Protein kinase spans 25–319 (FDVRKRMGKG…AKEAIRHPYV (295 aa)). ATP-binding positions include 31 to 39 (MGKGAYGIV) and Lys-54. The Proton acceptor role is filled by Asp-149. Polar residues-rich tracts occupy residues 364-376 (CSNRTVSNSTPSS) and 390-403 (QARTTSAKQPTTSP). Disordered regions lie at residues 364 to 419 (CSNR…TQSR), 452 to 477 (PPAAAPPAPAATAPAVPRKSGDKSVP), 588 to 608 (PSETEHRQQREERAYQRQMKR), 711 to 742 (KKLQRSKESDEKDEDDRRALPEGIGGPGSQNY), 792 to 813 (ELNPAPDSGGRDSGSEHSPGRD), and 883 to 916 (CRHRHHKPNHHAPYDHMRPTEDDIQEADSLPESN). Composition is skewed to basic and acidic residues over residues 590-608 (ETEHRQQREERAYQRQMKR), 715-730 (RSKESDEKDEDDRRAL), and 800-811 (GGRDSGSEHSPG). The span at 883–892 (CRHRHHKPNH) shows a compositional bias: basic residues. Basic and acidic residues predominate over residues 894–903 (APYDHMRPTE).

It belongs to the protein kinase superfamily. Ser/Thr protein kinase family.

It carries out the reaction L-seryl-[protein] + ATP = O-phospho-L-seryl-[protein] + ADP + H(+). The enzyme catalyses L-threonyl-[protein] + ATP = O-phospho-L-threonyl-[protein] + ADP + H(+). Its function is as follows. Atypical MAPK protein that regulates protein secretion in a kinase activity-dependent manner. In response to starvation regulates protein secretion by mediating transitional endoplasmic reticulum site disassembly. Mediates inhibition of insulin-like peptide secretion upon disturbed ribosome biogenesis and acts as a downstream effector of TP53. The polypeptide is Extracellular signal-regulated kinase 7 (Drosophila melanogaster (Fruit fly)).